Here is a 266-residue protein sequence, read N- to C-terminus: Type III pantothenate kinase (266 aa).

6–13 (DVGNSHTV) lines the ATP pocket. 112-115 (GIDR) contacts substrate. Residue D114 is the Proton acceptor of the active site. Residue D134 coordinates K(+). T137 contacts ATP. T190 is a binding site for substrate.

Belongs to the type III pantothenate kinase family. As to quaternary structure, homodimer. NH4(+) serves as cofactor. The cofactor is K(+).

The protein resides in the cytoplasm. It carries out the reaction (R)-pantothenate + ATP = (R)-4'-phosphopantothenate + ADP + H(+). It functions in the pathway cofactor biosynthesis; coenzyme A biosynthesis; CoA from (R)-pantothenate: step 1/5. In terms of biological role, catalyzes the phosphorylation of pantothenate (Pan), the first step in CoA biosynthesis. This is Type III pantothenate kinase from Desulfotalea psychrophila (strain LSv54 / DSM 12343).